We begin with the raw amino-acid sequence, 474 residues long: N-lysine methyltransferase SETD6 (474 aa).

Position 14 is a phosphoserine (Ser14). Residues 63-287 form the SET domain; the sequence is PKVLVSRQGT…KGHEIFNTYG (225 aa). Lys64 bears the N6-methylated lysine; by autocatalysis mark. 74–76 is an S-adenosyl-L-methionine binding site; it reads AGY. Trp123 contributes to the substrate binding site. N6-methylated lysine; by autocatalysis is present on Lys180. Residue Tyr224 participates in S-adenosyl-L-methionine binding. 2 residues coordinate substrate: Ser225 and Gln227. S-adenosyl-L-methionine contacts are provided by residues 252–253 and Tyr298; that span reads NH. Lys373 carries the N6-methylated lysine; by autocatalysis modification.

This sequence belongs to the class V-like SAM-binding methyltransferase superfamily. Histone-lysine methyltransferase family. SETD6 subfamily. In terms of assembly, monomer, homodimer and homotrimer; these structures are stabilized in the presence of S-adenosyl-L-methionine (SAM). Automethylated.

It is found in the nucleus. It carries out the reaction L-lysyl-[protein] + S-adenosyl-L-methionine = N(6)-methyl-L-lysyl-[protein] + S-adenosyl-L-homocysteine + H(+). The enzyme catalyses L-lysyl(8)-[histone H2AZ] + S-adenosyl-L-methionine = N(6)-methyl-L-lysyl(8)-[histone H2AZ] + S-adenosyl-L-homocysteine + H(+). In terms of biological role, protein-lysine N-methyltransferase. Monomethylates 'Lys-310' of the RELA subunit of NF-kappa-B complex, leading to down-regulation of NF-kappa-B transcription factor activity. Monomethylates 'Lys-8' of H2AZ (H2AZK8me1). Required for the maintenance of embryonic stem cell self-renewal. Methylates PAK4. The sequence is that of N-lysine methyltransferase SETD6 (Setd6) from Rattus norvegicus (Rat).